We begin with the raw amino-acid sequence, 95 residues long: UPF0358 protein BT9727_3692 (95 aa).

This sequence belongs to the UPF0358 family.

The chain is UPF0358 protein BT9727_3692 from Bacillus thuringiensis subsp. konkukian (strain 97-27).